The primary structure comprises 415 residues: Serine--tRNA ligase (415 aa).

230-232 (TAE) is a binding site for L-serine. Residue 261–263 (RKE) participates in ATP binding. Glu-284 serves as a coordination point for L-serine. 348-351 (EISS) serves as a coordination point for ATP. L-serine is bound at residue Ser-382.

It belongs to the class-II aminoacyl-tRNA synthetase family. Type-1 seryl-tRNA synthetase subfamily. As to quaternary structure, homodimer. The tRNA molecule binds across the dimer.

It localises to the cytoplasm. It carries out the reaction tRNA(Ser) + L-serine + ATP = L-seryl-tRNA(Ser) + AMP + diphosphate + H(+). The catalysed reaction is tRNA(Sec) + L-serine + ATP = L-seryl-tRNA(Sec) + AMP + diphosphate + H(+). It participates in aminoacyl-tRNA biosynthesis; selenocysteinyl-tRNA(Sec) biosynthesis; L-seryl-tRNA(Sec) from L-serine and tRNA(Sec): step 1/1. Functionally, catalyzes the attachment of serine to tRNA(Ser). Is also able to aminoacylate tRNA(Sec) with serine, to form the misacylated tRNA L-seryl-tRNA(Sec), which will be further converted into selenocysteinyl-tRNA(Sec). This is Serine--tRNA ligase from Sulfurimonas denitrificans (strain ATCC 33889 / DSM 1251) (Thiomicrospira denitrificans (strain ATCC 33889 / DSM 1251)).